A 557-amino-acid polypeptide reads, in one-letter code: Potassium-transporting ATPase potassium-binding subunit (557 aa).

10 helical membrane passes run 6-26, 59-79, 127-147, 172-192, 247-267, 278-298, 363-383, 410-430, 475-495, and 520-540; these read IQLL…GLGL, ALSL…ILFF, AGLT…LLAL, LYVL…FGVV, ISNF…VFLY, WAIF…VWTF, IVFG…LLTV, ILGI…SVSV, VMIA…VLVI, and FYIL…FPVL.

The protein belongs to the KdpA family. As to quaternary structure, the system is composed of three essential subunits: KdpA, KdpB and KdpC.

Its subcellular location is the cell inner membrane. Its function is as follows. Part of the high-affinity ATP-driven potassium transport (or Kdp) system, which catalyzes the hydrolysis of ATP coupled with the electrogenic transport of potassium into the cytoplasm. This subunit binds the periplasmic potassium ions and delivers the ions to the membrane domain of KdpB through an intramembrane tunnel. This chain is Potassium-transporting ATPase potassium-binding subunit, found in Leptospira interrogans serogroup Icterohaemorrhagiae serovar copenhageni (strain Fiocruz L1-130).